The primary structure comprises 183 residues: SAYSvFN domain-containing protein 1 (183 aa).

The Cytoplasmic segment spans residues methionine 1–lysine 105. A disordered region spans residues alanine 11 to glutamate 36. Residues glycine 16–glutamate 36 show a composition bias toward low complexity. Positions serine 91–lysine 105 are middle helical (MH). The segment at residues valine 106–phenylalanine 126 is an intramembrane region (helical). Topologically, residues valine 127 to arginine 183 are cytoplasmic.

Belongs to the SAYSD1 family. Associates (via N-terminus) with ribosomes.

The protein resides in the endoplasmic reticulum membrane. It is found in the cytoplasmic vesicle membrane. Functionally, ufmylation 'reader' component of a translocation-associated quality control pathway, a mechanism that takes place when a ribosome has stalled during translation, and which is required to degrade clogged substrates. Specifically recognizes and binds ufmylated ribosomes when a ribosome has stalled, promoting the transport of stalled nascent chain via the TRAPP complex to lysosomes for degradation. In Homo sapiens (Human), this protein is SAYSvFN domain-containing protein 1.